The following is a 93-amino-acid chain: Large ribosomal subunit protein bL27 (93 aa).

A propeptide spanning residues 1–8 is cleaved from the precursor; that stretch reads MIMDLQFF. Residues 8-29 are disordered; the sequence is FSHHKGGGSTANGRNSAGRRLG.

The protein belongs to the bacterial ribosomal protein bL27 family. Post-translationally, the N-terminus is cleaved by ribosomal processing cysteine protease Prp.

This is Large ribosomal subunit protein bL27 from Limosilactobacillus reuteri (strain DSM 20016) (Lactobacillus reuteri).